We begin with the raw amino-acid sequence, 1123 residues long: Ubiquitin carboxyl-terminal hydrolase 36 (1123 aa).

2 stretches are compositionally biased toward basic and acidic residues: residues 1–19 (MPIV…KDSA) and 69–90 (GASR…EHTY). Disordered stretches follow at residues 1–22 (MPIV…ADDG) and 67–95 (TEGA…SCGD). The 302-residue stretch at 122–423 (AGLHNLGNTC…QAYVLFYLRI (302 aa)) folds into the USP domain. Catalysis depends on cysteine 131, which acts as the Nucleophile. Histidine 382 (proton acceptor) is an active-site residue. Phosphoserine is present on residues serine 429 and serine 464. Residues 430–577 (PEGLISRTGS…RQGSWDSRDV (148 aa)) form a disordered region. Polar residues predominate over residues 491–503 (RNGSTLGLKSQNG). Over residues 510–519 (PSGSPSPKLS) the composition is skewed to low complexity. Phosphoserine is present on serine 546. A compositionally biased stretch (low complexity) spans 557-571 (SNSNSSRSGSQRQGS). A Phosphoserine modification is found at serine 582. Residues 589-999 (ATANGHGLKG…ESSSCAPSAN (411 aa)) are disordered. Basic and acidic residues predominate over residues 597 to 609 (KGNDESAGLDRRG). Residues 610 to 623 (SSSSSPEHSASSDS) show a composition bias toward low complexity. A compositionally biased stretch (polar residues) spans 640–654 (SQETNCSTAGHSKTP). Phosphoserine is present on serine 667. Positions 669-681 (VLSNTTTEPASTM) are enriched in polar residues. Serine 682 is modified (phosphoserine). Residues 687-697 (KKLALSAKKAS) show a composition bias toward low complexity. A phosphoserine mark is found at serine 713 and serine 742. A compositionally biased stretch (polar residues) spans 773 to 785 (EPRSCSSISTALP). Positions 841–850 (HGKRKRKKKK) are enriched in basic residues. The segment covering 891–902 (GTQPQVNGQQVG) has biased composition (polar residues). Position 952 is a phosphoserine (serine 952). Residues 963-975 (QETQRAVEEDGHL) show a composition bias toward basic and acidic residues.

This sequence belongs to the peptidase C19 family. As to quaternary structure, interacts with isoform 3 of FBXW7; the interaction inhibits MYC degradation induced by SCF(FBW7) complex. Interacts with NTRK1; USP36 does not deubiquitinate NTRK1. Interacts with NEDD4L (via domains WW1, 3 and 4); the interaction inhibits ubiquitination of, at least, NTRK1, KCNQ2 and KCNQ3 by NEDD4L. Interacts (via C-terminus) with EXOSC10 (via C-terminus); the interaction is facilitated by the association with RNA and promotes sumoylation of EXOSC10. Polyubiquitinated by NEDD4L, no effect on USP36 protein levels. Both proteins interact with and regulate each other's ubiquitination levels. Broadly expressed.

The protein resides in the nucleus. It localises to the nucleolus. Its subcellular location is the cytoplasm. It carries out the reaction Thiol-dependent hydrolysis of ester, thioester, amide, peptide and isopeptide bonds formed by the C-terminal Gly of ubiquitin (a 76-residue protein attached to proteins as an intracellular targeting signal).. Deubiquitinase essential for the regulation of nucleolar structure and function. Required for cell and organism viability. Plays an important role in ribosomal RNA processing and protein synthesis, which is mediated, at least in part, through deubiquitination of DHX33, NPM1 and FBL, regulating their protein stability. Functions as a transcriptional repressor by deubiquiting histone H2B at the promoters of genes critical for cellular differentiation, such as CDKN1A, thereby preventing histone H3 'Lys-4' trimethylation (H3K4). Specifically deubiquitinates MYC in the nucleolus, leading to prevent MYC degradation by the proteasome: acts by specifically interacting with isoform 3 of FBXW7 (FBW7gamma) in the nucleolus and counteracting ubiquitination of MYC by the SCF(FBW7) complex. In contrast, it does not interact with isoform 1 of FBXW7 (FBW7alpha) in the nucleoplasm. Interacts to and regulates the actions of E3 ubiquitin-protein ligase NEDD4L over substrates such as NTRK1, KCNQ2 and KCNQ3, affecting their expression an functions. Deubiquitinates SOD2, regulates SOD2 protein stability. Deubiquitinase activity is required to control selective autophagy activation by ubiquitinated proteins. Promotes CEP63 stabilization through 'Lys-48'-linked deubiquitination leading to increased stability. Acts as a SUMO ligase to promote EXOSC10 sumoylation critical for the nucleolar RNA exosome function in rRNA processing. Binds to pre-rRNAs. The polypeptide is Ubiquitin carboxyl-terminal hydrolase 36 (Homo sapiens (Human)).